Here is a 158-residue protein sequence, read N- to C-terminus: NAD(P)H-quinone oxidoreductase subunit J, chloroplastic (158 aa).

The protein belongs to the complex I 30 kDa subunit family. NDH is composed of at least 16 different subunits, 5 of which are encoded in the nucleus.

It localises to the plastid. It is found in the chloroplast thylakoid membrane. The catalysed reaction is a plastoquinone + NADH + (n+1) H(+)(in) = a plastoquinol + NAD(+) + n H(+)(out). The enzyme catalyses a plastoquinone + NADPH + (n+1) H(+)(in) = a plastoquinol + NADP(+) + n H(+)(out). NDH shuttles electrons from NAD(P)H:plastoquinone, via FMN and iron-sulfur (Fe-S) centers, to quinones in the photosynthetic chain and possibly in a chloroplast respiratory chain. The immediate electron acceptor for the enzyme in this species is believed to be plastoquinone. Couples the redox reaction to proton translocation, and thus conserves the redox energy in a proton gradient. The polypeptide is NAD(P)H-quinone oxidoreductase subunit J, chloroplastic (Crucihimalaya wallichii (Rock-cress)).